A 181-amino-acid polypeptide reads, in one-letter code: Probable Brix domain-containing ribosomal biogenesis protein (181 aa).

A Brix domain is found at 5–181 (CKVIITTSRE…RIKKVVYRHV (177 aa)).

Functionally, probably involved in the biogenesis of the ribosome. The sequence is that of Probable Brix domain-containing ribosomal biogenesis protein from Pyrobaculum aerophilum (strain ATCC 51768 / DSM 7523 / JCM 9630 / CIP 104966 / NBRC 100827 / IM2).